Here is a 260-residue protein sequence, read N- to C-terminus: Voltage-dependent calcium channel gamma-6 subunit (260 aa).

4 helical membrane passes run Leu-43–Val-63, Val-143–Leu-163, Ser-169–Leu-189, and Leu-221–Leu-241.

The protein belongs to the PMP-22/EMP/MP20 family. CACNG subfamily. Interacts with CACNA1C. Identified in a complex with the L-type calcium channel subunits CACNA1C, CACNA2D1 and either CACNB1 or CACNB2. As to expression, detected in brain and heart (at protein level).

It localises to the cell membrane. Regulates the activity of L-type calcium channels that contain CACNA1C as pore-forming subunit. This is Voltage-dependent calcium channel gamma-6 subunit (Cacng6) from Mus musculus (Mouse).